We begin with the raw amino-acid sequence, 244 residues long: INO80 complex subunit E (244 aa).

Residues 10–54 (DYKKKYRNLKRKLKFLIYEHECFQEELRKAQRKLLKVSRDKSFLL) adopt a coiled-coil conformation. The segment at 63–236 (VDEDSSDSDA…SGDDALDGDD (174 aa)) is disordered. A compositionally biased stretch (low complexity) spans 99–115 (PPLGGAPSPSSLSLPPS). The span at 157-171 (RPKREKRPRLPRKLK) shows a compositional bias: basic residues. Glycyl lysine isopeptide (Lys-Gly) (interchain with G-Cter in SUMO2) cross-links involve residues Lys159 and Lys171. The span at 202–212 (PLPPPKMPPPT) shows a compositional bias: pro residues.

In terms of assembly, component of the chromatin remodeling INO80 complex; specifically part of a complex module associated with the N-terminus of INO80.

The protein resides in the nucleus. In terms of biological role, putative regulatory component of the chromatin remodeling INO80 complex which is involved in transcriptional regulation, DNA replication and probably DNA repair. The polypeptide is INO80 complex subunit E (INO80E) (Homo sapiens (Human)).